The chain runs to 1179 residues: Calcium-activated potassium channel subunit alpha-1 (1179 aa).

Gly residues predominate over residues 1-24 (MANGGGGGGGSSGGGGGGGGGGSG). A disordered region spans residues 1–62 (MANGGGGGGG…SSSSSSSSSV (62 aa)). At 1-87 (MANGGGGGGG…VPCDSRGQRM (87 aa)) the chain is on the extracellular side. The segment covering 41-61 (SSSSSSSSSSSSSSSSSSSSS) has biased composition (low complexity). The helical transmembrane segment at 88 to 108 (WWAFLASSMVTFFGGLFIILL) threads the bilayer. The Cytoplasmic portion of the chain corresponds to 109 to 179 (WRTLKYLWTV…MISAQTLTGR (71 aa)). Residues cysteine 119, cysteine 120, and cysteine 122 are each lipidated (S-palmitoyl cysteine). The helical transmembrane segment at 180 to 200 (VLVVLVFALSIGALVIYFIDS) threads the bilayer. Residues 201–215 (SNPIESCQNFYKDFT) lie on the Extracellular side of the membrane. A helical transmembrane segment spans residues 216-236 (LQIDMAFNVFFLLYFGLRFIA). At 237–240 (ANDK) the chain is on the cytoplasmic side. A helical membrane pass occupies residues 241–261 (LWFWLEVNSVVDFFTVPPVFV). Over 262–265 (SVYL) the chain is Extracellular. The helical; Voltage-sensor transmembrane segment at 266-286 (NRSWLGLRFLRALRLIQFSEI) threads the bilayer. Residues 287-301 (LQFLNILKTSNSIKL) are Cytoplasmic-facing. A helical transmembrane segment spans residues 302 to 322 (VNLLSIFISTWLTAAGFIHLV). At 323 to 336 (ENSGDPWENFQNNQ) the chain is on the extracellular side. Residues 337–359 (ALTYWECVYLLMVTMSTVGYGDV) constitute an intramembrane region (pore-forming). Positions 353 to 356 (TVGY) match the Selectivity for potassium motif. The Extracellular portion of the chain corresponds to 360–368 (YAKTTLGRL). The chain crosses the membrane as a helical span at residues 369 to 389 (FMVFFILGGLAMFASYVPEII). Residues 390–1179 (ELIGNRKKYG…KQKYVQEERL (790 aa)) lie on the Cytoplasmic side of the membrane. Residues 408-550 (RKHIVVCGHI…WNWKEGDDAI (143 aa)) enclose the RCK N-terminal 1 domain. 3 residues coordinate Mg(2+): glutamate 440, glutamine 463, and glutamate 465. The tract at residues 557-577 (LGFIAQSCLAQGLSTMLANLF) is segment S7. The tract at residues 614 to 634 (LSFPTVCELCFVKLKLLMIAI) is segment S8. The segment at 678-682 (CKACH) is heme-binding motif. Residues 702-730 (EQPSTLSPKKKQRNGGMRNSPNSSPKLMR) are disordered. Position 706 is a phosphothreonine (threonine 706). A phosphoserine mark is found at serine 708, serine 721, and serine 725. The segment S9 stretch occupies residues 780 to 800 (VLSGHVVVCIFGDVSSALIGL). The RCK N-terminal 2 domain occupies 782–926 (SGHVVVCIFG…MDRSSPDNSP (145 aa)). Residue threonine 913 is modified to Phosphothreonine. Residues serine 921 and serine 925 each carry the phosphoserine modification. The short motif at 946–968 (TELVNDTNVQFLDQDDDDDPDTE) is the Calcium bowl element. The Ca(2+) site is built by glutamine 955, aspartate 958, aspartate 961, and aspartate 963. The segment at 975–995 (FACGTAFAVSVLDSLMSATYF) is segment S10. The span at 1129-1154 (RASLSHSSHSSQSSSKKSSSVHSIPS) shows a compositional bias: low complexity. Residues 1129–1179 (RASLSHSSHSSQSSSKKSSSVHSIPSTANRQNRPKSRESRDKQKYVQEERL) form a disordered region. Residues 1163-1179 (KSRESRDKQKYVQEERL) show a composition bias toward basic and acidic residues. 2 positions are modified to phosphoserine: serine 1164 and serine 1167.

This sequence belongs to the potassium channel family. Calcium-activated (TC 1.A.1.3) subfamily. KCa1.1/KCNMA1 sub-subfamily. In terms of assembly, homotetramer; which constitutes the calcium-activated potassium channel. Interacts with beta subunits KCNMB1, KCNMB2, KCNMB3 and KCNMB4. Interacts with gamma subunits LRRC26, LRRC38, LRRC52 and LRRC55. Beta and gamma subunits are accessory, and modulate its activity. Interacts with RAB11B. Phosphorylated. Phosphorylation by kinases such as PKA and/or PKG. In smooth muscles, phosphorylation affects its activity. In terms of processing, palmitoylation by ZDHHC22 and ZDHHC23 within the intracellular linker between the S0 and S1 transmembrane domains regulates localization to the plasma membrane. Depalmitoylated by LYPLA1 and LYPLAL1, leading to retard exit from the trans-Golgi network.

Its subcellular location is the cell membrane. It localises to the endoplasmic reticulum membrane. The enzyme catalyses K(+)(in) = K(+)(out). Its activity is regulated as follows. Ethanol and carbon monoxide-bound heme increase channel activation. Heme inhibits channel activation. In terms of biological role, potassium channel activated by both membrane depolarization or increase in cytosolic Ca(2+) that mediates export of K(+). It is also activated by the concentration of cytosolic Mg(2+). Its activation dampens the excitatory events that elevate the cytosolic Ca(2+) concentration and/or depolarize the cell membrane. It therefore contributes to repolarization of the membrane potential. Plays a key role in controlling excitability in a number of systems, such as regulation of the contraction of smooth muscle, the tuning of hair cells in the cochlea, regulation of transmitter release, and innate immunity. In smooth muscles, its activation by high level of Ca(2+), caused by ryanodine receptors in the sarcoplasmic reticulum, regulates the membrane potential. In cochlea cells, its number and kinetic properties partly determine the characteristic frequency of each hair cell and thereby helps to establish a tonotopic map. Kinetics of KCNMA1 channels are determined by alternative splicing, phosphorylation status and its combination with modulating beta subunits. Highly sensitive to both iberiotoxin (IbTx) and charybdotoxin (CTX). Its function is as follows. Potassium channel activated by both membrane depolarization or increase in cytosolic Ca(2+) that mediates export of K(+). In Oryctolagus cuniculus (Rabbit), this protein is Calcium-activated potassium channel subunit alpha-1 (KCNMA1).